Consider the following 192-residue polypeptide: Xanthine phosphoribosyltransferase (192 aa).

Residues Leu20 and Asn27 each contribute to the xanthine site. 128 to 132 (ANGQA) lines the 5-phospho-alpha-D-ribose 1-diphosphate pocket. Position 156 (Lys156) interacts with xanthine.

The protein belongs to the purine/pyrimidine phosphoribosyltransferase family. Xpt subfamily. As to quaternary structure, homodimer.

Its subcellular location is the cytoplasm. It carries out the reaction XMP + diphosphate = xanthine + 5-phospho-alpha-D-ribose 1-diphosphate. The protein operates within purine metabolism; XMP biosynthesis via salvage pathway; XMP from xanthine: step 1/1. Its function is as follows. Converts the preformed base xanthine, a product of nucleic acid breakdown, to xanthosine 5'-monophosphate (XMP), so it can be reused for RNA or DNA synthesis. This is Xanthine phosphoribosyltransferase from Listeria innocua serovar 6a (strain ATCC BAA-680 / CLIP 11262).